The sequence spans 382 residues: MTEQRPLTIALVAGETSGDILGAGLIRALKERVPNARFVGVAGPRMQAEGCEAWYEIEELAVMGIVEVLGRLRRLLHIHADLTKRFGELKPDVFVGIDAPDFNITLEGNLKKQGIKTIHYVSPSVWAWRQKRVFKIGRATDLVLAFLPFEKAFYDKYNVPCRFIGHTMADAMPLDPDKNAARDVLGIPHDTHCLALLPGSRGAEVEMLSADFLKTAQLLRQTYPDLEIVVPLVNAKRREQFERIKAEVAPDLSVHLLDGMGREAMVASDAALLASGTAALECMLAKCPMVVGYRMKPFTFWLAKLLVKTDYVSLPNLLAGRELVKELLQEECEPQKLAAALLPLLANGKTSHAMHDTFRELHQQIRCNADEQAAQAVLELAQ.

The protein belongs to the LpxB family.

The enzyme catalyses 2-N,3-O-bis[(3R)-3-hydroxytetradecanoyl]-alpha-D-glucosaminyl 1-phosphate + UDP-2-N,3-O-bis[(3R)-3-hydroxytetradecanoyl]-alpha-D-glucosamine = lipid A disaccharide (E. coli) + UDP + H(+). It catalyses the reaction a lipid X + a UDP-2-N,3-O-bis[(3R)-3-hydroxyacyl]-alpha-D-glucosamine = a lipid A disaccharide + UDP + H(+). Its pathway is glycolipid biosynthesis; lipid IV(A) biosynthesis; lipid IV(A) from (3R)-3-hydroxytetradecanoyl-[acyl-carrier-protein] and UDP-N-acetyl-alpha-D-glucosamine: step 5/6. In terms of biological role, condensation of UDP-2,3-diacylglucosamine and 2,3-diacylglucosamine-1-phosphate to form lipid A disaccharide, a precursor of lipid A, a phosphorylated glycolipid that anchors the lipopolysaccharide to the outer membrane of the cell. The chain is Lipid-A-disaccharide synthase from Shigella dysenteriae serotype 1 (strain Sd197).